The chain runs to 386 residues: 3-ketoacyl-CoA thiolase (386 aa).

Catalysis depends on C91, which acts as the Acyl-thioester intermediate. Catalysis depends on proton acceptor residues H342 and C372.

Belongs to the thiolase-like superfamily. Thiolase family. In terms of assembly, heterotetramer of two alpha chains (FadB) and two beta chains (FadA).

The protein localises to the cytoplasm. The enzyme catalyses an acyl-CoA + acetyl-CoA = a 3-oxoacyl-CoA + CoA. Its pathway is lipid metabolism; fatty acid beta-oxidation. Catalyzes the final step of fatty acid oxidation in which acetyl-CoA is released and the CoA ester of a fatty acid two carbons shorter is formed. In Pseudoalteromonas atlantica (strain T6c / ATCC BAA-1087), this protein is 3-ketoacyl-CoA thiolase.